A 384-amino-acid chain; its full sequence is Sensor-like histidine kinase SenX3 (384 aa).

One can recognise a Histidine kinase domain in the interval 153–369; that stretch reads NVSHELKTPV…TFTLSIPEYP (217 aa). A Phosphohistidine; by autocatalysis modification is found at His-156. A disordered region spans residues 360–384; that stretch reads TFTLSIPEYPDPESHSDEREDQRER. Residues 371 to 384 show a composition bias toward basic and acidic residues; sequence PESHSDEREDQRER.

Autophosphorylated.

The protein resides in the cell membrane. It catalyses the reaction ATP + protein L-histidine = ADP + protein N-phospho-L-histidine.. In terms of biological role, member of the two-component regulatory system SenX3/RegX3 involved in stress response. The system is involved in phosphate starvation response. Probably exhibits a dual role as a phosphatase or a phosphodonor for the response regulator RegX3, depending upon phosphate availability. When environmental phosphate is abundant, SenX3 is required to maintain RegX3 in an unphosphorylated state, where it is unable to bind target DNA. Under conditions of phosphate limitation, SenX3 autophosphorylates and then transfers the phosphate group to RegX3. Probably does not itself sense phosphate concentrations, which may be relayed to SenX3 by the PstSCAB phosphate transporter system. The sequence is that of Sensor-like histidine kinase SenX3 from Mycolicibacterium smegmatis (strain ATCC 700084 / mc(2)155) (Mycobacterium smegmatis).